The chain runs to 707 residues: MPEEAGFPPAKRFRPGSGPPSRAGSFPPGRQVVMLLTAGSGGRGGGGGRRQQPPLAQPSASPYPEAVELQRRSLPIFQARGQLLAQLRNLDNAVLIGETGSGKTTQIPQYLYEGGISRQGIIAVTQPRRVAAISLATRVSDEKRTELGKLVGYTVRFDDVTSEDTRIKFLTDGMLLREAISDSLLRKYSCVILDEAHERTIHTDVLFGVVKAAQKRRKELGKLPLKVIVMSATMDVDLFSQYFNGAPVLYLEGRQHPIQVFYTKQPQNDYLHAALVSVFQIHQEAPSSQDILVFLTGQEEIEAMSKTCRDIAKHLPDGCPAMLVLPLYASLPYAQQLRVFQGAPKGYRKVIISTNIAETSITITGIKYVVDTGMVKAKKYNPDSGLEVLAVQRVSKTQAWQRTGRAGREDSGICYRLYTEDEFEKFDKMTVPEIQRCNLASVMLQLLAMKVPNVLTFDFMSKPSPDHIQAAIAQLDLLGALEHKDDQLTLTPMGRKMAAFPLEPKFAKTILMSPKFHCTEEILTIVSLLSVDSVLHNPPSRREEVQGVRKKFISSEGDHMTLLNIYRTFKNLGGNKDWCKENFVNSKNMTLVAEVRAQLRDICLKMSMPIASSRGDVESVRRCLAHSLFMSTAELQPDGTYATTDTHQPVAIHPSSVLFHCKPACVVYTELLYTNKCYMRDLCVIDAQWLYEAAPEYFRRKLRTARN.

The segment at methionine 1–proline 64 is disordered. The segment at methionine 1–arginine 80 is required for nucleolar location. Residues glycine 39–arginine 49 are compositionally biased toward gly residues. Over residues arginine 50–proline 64 the composition is skewed to low complexity. Residues leucine 84–glutamate 252 form the Helicase ATP-binding domain. Position 97–104 (glycine 97–threonine 104) interacts with ATP. The DEAH box signature appears at aspartate 194–histidine 197. Residues serine 277–lysine 450 form the Helicase C-terminal domain. The tract at residues alanine 471 to leucine 562 is HA2; required for interaction with EIF3G and RPL26. A Critical for rDNA-binding motif is present at residues glycine 547 to aspartate 558.

It belongs to the DEAD box helicase family. DEAH subfamily. Interacts with UBTF. Interacts with DDX3X, EIF3G and EIF3H; the interaction is independent of RNA. Interacts (via HA2 region and Helicase C-terminal domain) with the components of the large ribosomal subunit RPL3, RPL7, RPL26 and RPL27. Interacts (via DEAH box) with NLRP3 (via NACHT domain). Binds to mRNA. Binds to double-stranded RNA (via the helicase C-terminal domain). Interacts (via the helicase C-terminal domain) with MAVS. In terms of processing, ubiquitinated, leading to its degradation by the proteasome. Deubiquitinated by USP36.

The protein resides in the nucleus. It localises to the nucleolus. The protein localises to the nucleoplasm. Its subcellular location is the cytoplasm. It is found in the inflammasome. The catalysed reaction is ATP + H2O = ADP + phosphate + H(+). In terms of biological role, implicated in nucleolar organization, ribosome biogenesis, protein synthesis and cytoplasmic dsRNA sensing. Stimulates RNA polymerase I transcription of the 47S precursor rRNA. Associates with ribosomal DNA (rDNA) loci where it is involved in POLR1A recruitment. In the cytoplasm, promotes elongation-competent 80S ribosome assembly at the late stage of mRNA translation initiation. Senses cytosolic dsRNA mediating NLRP3 inflammasome formation in macrophages and type I interferon production in myeloid dendritic cells. Required for NLRP3 activation induced by viral dsRNA and bacterial RNA. In dendritic cells, required for induction of type I interferon production induced by cytoplasmic dsRNA via the activation of MAPK and NF-kappa-B signaling pathways. This chain is ATP-dependent RNA helicase DHX33, found in Homo sapiens (Human).